A 277-amino-acid chain; its full sequence is Indole-3-glycerol phosphate synthase (277 aa).

Belongs to the TrpC family.

It carries out the reaction 1-(2-carboxyphenylamino)-1-deoxy-D-ribulose 5-phosphate + H(+) = (1S,2R)-1-C-(indol-3-yl)glycerol 3-phosphate + CO2 + H2O. It participates in amino-acid biosynthesis; L-tryptophan biosynthesis; L-tryptophan from chorismate: step 4/5. In Pseudomonas putida (strain ATCC 700007 / DSM 6899 / JCM 31910 / BCRC 17059 / LMG 24140 / F1), this protein is Indole-3-glycerol phosphate synthase.